The primary structure comprises 311 residues: Pyrimidine-specific ribonucleoside hydrolase RihA (311 aa).

His240 is a catalytic residue.

The protein belongs to the IUNH family. RihA subfamily.

In terms of biological role, hydrolyzes cytidine or uridine to ribose and cytosine or uracil, respectively. The sequence is that of Pyrimidine-specific ribonucleoside hydrolase RihA from Salmonella newport (strain SL254).